Here is a 457-residue protein sequence, read N- to C-terminus: tRNA modification GTPase MnmE (457 aa).

3 residues coordinate (6S)-5-formyl-5,6,7,8-tetrahydrofolate: arginine 24, glutamate 81, and lysine 124. The TrmE-type G domain maps to 220–379 (GIQLVLAGAP…LKQKILHVVG (160 aa)). Asparagine 230 is a binding site for K(+). GTP is bound by residues 230 to 235 (NVGKSS), 249 to 255 (TPIAGTT), and 274 to 277 (DTAG). Serine 234 is a binding site for Mg(2+). Positions 249, 251, and 254 each coordinate K(+). Threonine 255 lines the Mg(2+) pocket. Lysine 457 contacts (6S)-5-formyl-5,6,7,8-tetrahydrofolate.

The protein belongs to the TRAFAC class TrmE-Era-EngA-EngB-Septin-like GTPase superfamily. TrmE GTPase family. As to quaternary structure, homodimer. Heterotetramer of two MnmE and two MnmG subunits. K(+) serves as cofactor.

Its subcellular location is the cytoplasm. Its function is as follows. Exhibits a very high intrinsic GTPase hydrolysis rate. Involved in the addition of a carboxymethylaminomethyl (cmnm) group at the wobble position (U34) of certain tRNAs, forming tRNA-cmnm(5)s(2)U34. This Polynucleobacter asymbioticus (strain DSM 18221 / CIP 109841 / QLW-P1DMWA-1) (Polynucleobacter necessarius subsp. asymbioticus) protein is tRNA modification GTPase MnmE.